The sequence spans 124 residues: Large ribosomal subunit protein bL17 (124 aa).

This sequence belongs to the bacterial ribosomal protein bL17 family. In terms of assembly, part of the 50S ribosomal subunit. Contacts protein L32.

The sequence is that of Large ribosomal subunit protein bL17 from Trichlorobacter lovleyi (strain ATCC BAA-1151 / DSM 17278 / SZ) (Geobacter lovleyi).